Reading from the N-terminus, the 873-residue chain is Inner centromere protein A (873 aa).

Disordered stretches follow at residues 50–124 (AEPE…KRMT), 237–270 (PANEQQLNLSNQSATPTGSKSDRRSVRRSLVVRK), 282–452 (FSLA…PPPH), 484–535 (KRNT…KVRR), 566–649 (QIDE…LAEQ), 683–736 (LERA…EQAA), and 781–800 (DLNSDDSTDDESQPRKPIPA). The span at 60–69 (SQKRRRKKRT) shows a compositional bias: basic residues. Over residues 87-105 (RQSNASWSSSVRRLSVRNQ) the composition is skewed to low complexity. Over residues 239 to 254 (NEQQLNLSNQSATPTG) the composition is skewed to polar residues. The segment covering 261–270 (SVRRSLVVRK) has biased composition (basic residues). Residues 286–297 (SKRESMTREAVR) are compositionally biased toward basic and acidic residues. Residues 314 to 325 (SSTSSQRSYQSS) are compositionally biased toward low complexity. The segment covering 437-452 (PSPPCPPSKIVRPPPH) has biased composition (pro residues). 4 stretches are compositionally biased toward basic and acidic residues: residues 491–535 (TDPK…KVRR), 566–584 (QIDEKSEKVREDRMAEEKA), 591–649 (KKQE…LAEQ), and 683–733 (LERA…KAKE). The SAH stretch occupies residues 494–707 (KTEEKERQRL…EERKKREQQE (214 aa)). The interval 782 to 856 (LNSDDSTDDE…RTSSAVWHSP (75 aa)) is IN box. Residues serine 849 and serine 850 each carry the phosphoserine modification.

The protein belongs to the INCENP family. As to quaternary structure, component of the CPC composed of survivin/birc5, incenp, cdca8/borealin and/or cdca9/dasra-A, and aurkb/aurora-B. Interacts (via C-terminus) with aurkb (via N-terminus and kinase domain). Interacts (via N-terminus) with birc5.1, birc5.2, cdca8 and cdca9. Interacts with mtus1.

Its subcellular location is the nucleus. It is found in the chromosome. The protein localises to the centromere. The protein resides in the cytoplasm. It localises to the cytoskeleton. Its subcellular location is the spindle. It is found in the midbody. The protein localises to the kinetochore. Functionally, component of the chromosomal passenger complex (CPC), a complex that acts as a key regulator of mitosis. The CPC complex has essential functions at the centromere in ensuring correct chromosome alignment and segregation and is required for chromatin-induced microtubule stabilization and spindle assembly. Acts as a scaffold regulating CPC localization and activity. The C-terminus associates with aurkb/aurora-B, the N-terminus associated with cdca8/borealin and/or cdca9/dasra-A tethers the CPC to the inner centromere, and the microtubule binding activity within the central SAH domain directs aurkb/aurora-B toward substrates near microtubules. Activates aurkb. The sequence is that of Inner centromere protein A (incenp-a) from Xenopus laevis (African clawed frog).